The primary structure comprises 875 residues: Probable dipeptidyl-aminopeptidase B (875 aa).

The disordered stretch occupies residues Met-1–Lys-90. Over Met-1–Lys-98 the chain is Cytoplasmic. Low complexity predominate over residues Ser-19–Ser-28. Residues Arg-33 to Ser-46 show a composition bias toward basic and acidic residues. Residues Val-99–Leu-119 traverse the membrane as a helical; Signal-anchor for type II membrane protein segment. At Thr-120–Ser-875 the chain is on the vacuolar side. Residues Asn-354 and Asn-567 are each glycosylated (N-linked (GlcNAc...) asparagine). The interval Val-689–Ser-715 is disordered. The segment covering Arg-699 to Thr-708 has biased composition (basic residues). Ser-726 serves as the catalytic Charge relay system. Asn-785 is a glycosylation site (N-linked (GlcNAc...) asparagine). Catalysis depends on charge relay system residues Asp-803 and His-836.

It belongs to the peptidase S9B family.

It is found in the vacuole membrane. It catalyses the reaction Release of an N-terminal dipeptide, Xaa-Yaa-|-Zaa-, from a polypeptide, preferentially when Yaa is Pro, provided Zaa is neither Pro nor hydroxyproline.. Functionally, type IV dipeptidyl-peptidase which removes N-terminal dipeptides sequentially from polypeptides having unsubstituted N-termini provided that the penultimate residue is proline. The sequence is that of Probable dipeptidyl-aminopeptidase B (DAPB) from Verticillium alfalfae (strain VaMs.102 / ATCC MYA-4576 / FGSC 10136) (Verticillium wilt of alfalfa).